The primary structure comprises 760 residues: Xaa-Pro dipeptidyl-peptidase (760 aa).

Active-site charge relay system residues include S349, D469, and H499.

This sequence belongs to the peptidase S15 family. In terms of assembly, homodimer.

It localises to the cytoplasm. The catalysed reaction is Hydrolyzes Xaa-Pro-|- bonds to release unblocked, N-terminal dipeptides from substrates including Ala-Pro-|-p-nitroanilide and (sequentially) Tyr-Pro-|-Phe-Pro-|-Gly-Pro-|-Ile.. In terms of biological role, removes N-terminal dipeptides sequentially from polypeptides having unsubstituted N-termini provided that the penultimate residue is proline. The protein is Xaa-Pro dipeptidyl-peptidase of Streptococcus pyogenes serotype M49 (strain NZ131).